The following is an 820-amino-acid chain: Sodium/hydrogen exchanger 1 (820 aa).

Over 1–102 the chain is Extracellular; the sequence is MMLRWSGIWG…FPVLDIDYLH (102 aa). Residues 44-71 are disordered; the sequence is ASTIRGSEPPRERSIGDVTTAPSEPLHH. The helical transmembrane segment at 103–125 threads the bilayer; it reads VRTPFEISLWILLACLMKIGFHV. Residues 126 to 134 are Cytoplasmic-facing; it reads IPTISSIVP. A helical transmembrane segment spans residues 135–152; that stretch reads ESCLLIVVGLLVGGLIKG. Residues 153–162 are Extracellular-facing; sequence VGETPPFLQS. The helical transmembrane segment at 163–180 threads the bilayer; the sequence is DVFFLFLLPPIILDAGYF. At 181–190 the chain is on the cytoplasmic side; the sequence is LPLRQFTENL. The chain crosses the membrane as a helical span at residues 191 to 219; that stretch reads GTILIFAVVGTLWNAFFLGGLLYAVCLVG. Residues 220-226 lie on the Extracellular side of the membrane; it reads GEQINNI. The helical transmembrane segment at 227-253 threads the bilayer; sequence GLLDTLLFGSIISAVDPVAVLAVFEEI. The Cytoplasmic segment spans residues 254–256; that stretch reads HIN. A helical transmembrane segment spans residues 257–287; that stretch reads ELLHILVFGESLLNDAVTVVLYHLFEEFASY. At 288-291 the chain is on the extracellular side; that stretch reads EYVG. The chain crosses the membrane as a helical span at residues 292–326; sequence ISDIFLGFLSFFVVSLGGVFVGVVYGVIAAFTSRF. Over 327–332 the chain is Cytoplasmic; it reads TSHIRV. Residues 333-345 form a helical membrane-spanning segment; it reads IEPLFVFLYSYMA. Residues 346–354 are Extracellular-facing; sequence YLSAELFHL. Residues 355 to 375 form a helical membrane-spanning segment; sequence SGIMALIASGVVMRPYVEANI. Topologically, residues 376–377 are cytoplasmic; sequence SH. The helical transmembrane segment at 378–408 threads the bilayer; sequence KSHTTIKYFLKMWSSVSETLIFIFLGVSTVA. At 409–414 the chain is on the extracellular side; the sequence is GSHQWN. Residues 415 to 442 form a helical membrane-spanning segment; the sequence is WTFVISTLLFCLIARVLGVLVLTWFINK. The Cytoplasmic segment spans residues 443–448; sequence FRIVKL. The helical transmembrane segment at 449–473 threads the bilayer; sequence TPKDQFIIAYGGLRGAIAFSLGYLL. The Extracellular segment spans residues 474–479; sequence DKKHFP. Residues 480-509 traverse the membrane as a helical segment; it reads MCDLFLTAIITVIFFTVFVQGMTIRPLVDL. The segment at 505-571 is interaction with TESC; that stretch reads PLVDLLAVKK…VKKCLIAGER (67 aa). The Cytoplasmic segment spans residues 510–820; the sequence is LAVKKKQETK…EGEPFIPKGQ (311 aa). The segment at 513-520 is PI(4,5)P2-binding region; sequence KKKQETKR. The interval 519–549 is interaction with CHP2; sequence KRSINEEIHTQFLDHLLTGIEDICGHYGHHH. The tract at residues 544 to 549 is confers pH-dependent PI(4,5)P2 binding; that stretch reads HYGHHH. The interval 556-564 is PI(4,5)P2-binding region; that stretch reads RFNKKYVKK. A phosphoserine mark is found at serine 603 and serine 606. The residue at position 607 (threonine 607) is a Phosphothreonine. Residues serine 609 and serine 652 each carry the phosphoserine modification. The tract at residues 637–820 is interaction with TESC; the sequence is KILRSNLQKT…EGEPFIPKGQ (184 aa). Residues 637–820 are interaction with CALM1; the sequence is KILRSNLQKT…EGEPFIPKGQ (184 aa). An interaction with PPP3CA region spans residues 688-691; it reads LTVP. 3 positions are modified to phosphoserine: serine 697, serine 701, and serine 707. Residues 719–724 form an interaction with PPP3CA region; it reads PVITID. 3 positions are modified to phosphoserine: serine 727, serine 730, and serine 733. The tract at residues 747 to 820 is disordered; the sequence is GLKRGPRTTP…EGEPFIPKGQ (74 aa). 2 positions are modified to phosphothreonine: threonine 755 and threonine 784. Phosphoserine occurs at positions 790 and 801.

This sequence belongs to the monovalent cation:proton antiporter 1 (CPA1) transporter (TC 2.A.36) family. In terms of assembly, homodimer; dimerization is crucial for its function. Oligomer. Interacts with CALM1 in a calcium-dependent manner. Interacts with TESC. Interacts (via residues 504-563) with CHP1. The interaction with CHP1 occurs at the plasma membrane in a calcium-dependent manner. Interacts with CHP2. The interaction with CHP2 occurs in a calcium-dependent manner. Interacts with EZR; regulates the cytoskeletal interactions of SLC9A1 and promotes stress fiber formation. In terms of processing, N-glycosylated and O-glycosylated in the N-terminal region. Post-translationally, ubiquitinated, leading to its degradation by the proteasome. Ubiquitination is reduced by CHP1. Palmitoylated; may play a major role in SLC9A1 regulation. In terms of processing, phosphorylation at Thr-784 increases SLC9A1 activity; specifically dephosphorylated by PPP3CA. Specifically dephosphorylated at Thr-784 by PPP3CA that negatively regulates SLC9A1 activity. Phosphorylation at Ser-652 by AKT1 reduces SLC9A1 binding to CALM1. As to expression, widely expressed.

It is found in the cell membrane. It localises to the basolateral cell membrane. It carries out the reaction Na(+)(in) + H(+)(out) = Na(+)(out) + H(+)(in). It catalyses the reaction Li(+)(out) + H(+)(in) = Li(+)(in) + H(+)(out). The catalysed reaction is Li(+)(in) + Na(+)(out) = Li(+)(out) + Na(+)(in). With respect to regulation, activated at acidic pHs. Inhibited by cariporide and eniporide. Inhibited by amiloride and 5-amino-substituted derivatives. Phosphatidylinositol 4,5-bisphosphate (PI(4,5)P2) bind and activates SLC9A1 transporter activity. In terms of biological role, electroneutral Na(+) /H(+) antiporter that extrudes Na(+) in exchange for external protons driven by the inward sodium ion chemical gradient, protecting cells from acidification that occurs from metabolism. Exchanges intracellular H(+) ions for extracellular Na(+) in 1:1 stoichiometry. Plays a key role in maintening intracellular pH neutral and cell volume, and thus is important for cell growth, proliferation, migration and survival. In addition, can transport lithium Li(+) and also functions as a Na(+)/Li(+) antiporter. SLC9A1 also functions in membrane anchoring and organization of scaffolding complexes that coordinate signaling inputs. The chain is Sodium/hydrogen exchanger 1 (Slc9a1) from Rattus norvegicus (Rat).